We begin with the raw amino-acid sequence, 250 residues long: MQKKSIIIPALDLIDGNVVRLHQGDYAKQTTYSDNPIEQFANYLAQGAEQLHLVDLTGAKDPAKRQTALIGKIIAETNCQIQVGGGIRTEQDVADLLAVGANRVVIGSTAVKDRAMVKGWFEKYGAEKFVLALDVNIDASGQKIIAISGWQEASGVSLEELIEDYQVVGLQHVLCTDISRDGTLAGSNVNLYREICAKYPKIHFQSSGGIGSLDDIKALKGTGVSGVIVGRALLEGKFNVAEAIECWQNG.

Residue Asp12 is the Proton acceptor of the active site. The active-site Proton donor is the Asp134.

This sequence belongs to the HisA/HisF family.

It is found in the cytoplasm. The catalysed reaction is 1-(5-phospho-beta-D-ribosyl)-5-[(5-phospho-beta-D-ribosylamino)methylideneamino]imidazole-4-carboxamide = 5-[(5-phospho-1-deoxy-D-ribulos-1-ylimino)methylamino]-1-(5-phospho-beta-D-ribosyl)imidazole-4-carboxamide. It participates in amino-acid biosynthesis; L-histidine biosynthesis; L-histidine from 5-phospho-alpha-D-ribose 1-diphosphate: step 4/9. This is 1-(5-phosphoribosyl)-5-[(5-phosphoribosylamino)methylideneamino] imidazole-4-carboxamide isomerase from Actinobacillus pleuropneumoniae serotype 3 (strain JL03).